The primary structure comprises 177 residues: Putative HTH-type transcriptional regulator YvaV (177 aa).

A DNA-binding region (H-T-H motif) is located at residues 49-73 (LTELSEATGMSKTRMSQVVREMLDA).

The protein belongs to the GbsR family.

This chain is Putative HTH-type transcriptional regulator YvaV (yvaV), found in Bacillus subtilis (strain 168).